The chain runs to 528 residues: Phosphoenolpyruvate carboxykinase (ATP) (528 aa).

Residues arginine 56, tyrosine 192, and lysine 198 each contribute to the substrate site. ATP is bound by residues lysine 198, histidine 217, and 233–241 (GLSGTGKTT). Positions 198 and 217 each coordinate Mn(2+). Aspartate 254 provides a ligand contact to Mn(2+). 3 residues coordinate ATP: glutamate 282, arginine 319, and threonine 444. Arginine 319 is a substrate binding site.

The protein belongs to the phosphoenolpyruvate carboxykinase (ATP) family. Mn(2+) is required as a cofactor.

The protein localises to the cytoplasm. It catalyses the reaction oxaloacetate + ATP = phosphoenolpyruvate + ADP + CO2. It functions in the pathway carbohydrate biosynthesis; gluconeogenesis. Functionally, involved in the gluconeogenesis. Catalyzes the conversion of oxaloacetate (OAA) to phosphoenolpyruvate (PEP) through direct phosphoryl transfer between the nucleoside triphosphate and OAA. This chain is Phosphoenolpyruvate carboxykinase (ATP), found in Bacillus cereus (strain 03BB102).